A 501-amino-acid polypeptide reads, in one-letter code: Mitogen-activated protein kinase MKC1 (501 aa).

A Protein kinase domain is found at 28-339; sequence FKIVKELGHG…VRDALNHKYL (312 aa). Residues 34–42 and Lys74 each bind ATP; that span reads LGHGAYGIV. Asp174 functions as the Proton acceptor in the catalytic mechanism. Thr211 is modified (phosphothreonine). The short motif at 211-213 is the TXY element; sequence TEY. A Phosphotyrosine modification is found at Tyr213. The segment at 400–450 is disordered; the sequence is MQKREEQRQEEEEKELLEQQRQFPAQESMDISQTPYNNLETNIGTPQVEDD. The span at 422 to 444 shows a compositional bias: polar residues; the sequence is FPAQESMDISQTPYNNLETNIGT.

Belongs to the protein kinase superfamily. CMGC Ser/Thr protein kinase family. MAP kinase subfamily. It depends on Mg(2+) as a cofactor. Dually phosphorylated on Thr-211 and Tyr-213, which activates the enzyme.

It catalyses the reaction L-seryl-[protein] + ATP = O-phospho-L-seryl-[protein] + ADP + H(+). It carries out the reaction L-threonyl-[protein] + ATP = O-phospho-L-threonyl-[protein] + ADP + H(+). Its activity is regulated as follows. Activated by tyrosine and threonine phosphorylation. In Candida albicans (Yeast), this protein is Mitogen-activated protein kinase MKC1 (MKC1).